The sequence spans 112 residues: 2Fe-2S ferredoxin (112 aa).

The 2Fe-2S ferredoxin-type domain maps to 5 to 107 (IKVTFIINDE…GIKVRLPSAT (103 aa)). Residues Cys-42, Cys-48, Cys-51, and Cys-88 each coordinate [2Fe-2S] cluster.

The protein belongs to the adrenodoxin/putidaredoxin family. [2Fe-2S] cluster is required as a cofactor.

In terms of biological role, ferredoxin are iron-sulfur proteins that transfer electrons in a wide variety of metabolic reactions. This is 2Fe-2S ferredoxin (fdxB) from Rickettsia prowazekii (strain Madrid E).